We begin with the raw amino-acid sequence, 976 residues long: Chloride channel protein 1 (976 aa).

Topologically, residues 1 to 118 (MQPSQSLRRG…VVRRKLGEDW (118 aa)) are cytoplasmic. Residues 71–92 (DKEQDTGMSKKMGSSESMDSKD) form a disordered region. The span at 77-87 (GMSKKMGSSES) shows a compositional bias: low complexity. A helical membrane pass occupies residues 119-150 (IFLVLLGLLMALVSWSMDYVSAKSLQAYKWSY). Residues 151 to 158 (YQMQPNLP) are Extracellular-facing. Residues 159-179 (LQYLVWVTFPLTLILFSAVFC) traverse the membrane as a helical segment. Residues 180-183 (HLIS) lie on the Cytoplasmic side of the membrane. The segment at residues 184–189 (PQAVGS) is an intramembrane region (note=Loop between two helices). Positions 188–192 (GSGIP) match the Selectivity filter part_1 motif. S189 is a chloride binding site. Residues 190-195 (GIPEMK) constitute an intramembrane region (helical). Residues 196 to 208 (TILRGVILKEYLT) are Cytoplasmic-facing. An intramembrane region (helical) is located at residues 209 to 224 (LKAFVAKVVALTAGLG). Residues 225-230 (SGIPVG) constitute an intramembrane region (note=Loop between two helices). The Selectivity filter part_2 motif lies at 230 to 234 (GKEGP). The segment at residues 231–246 (KEGPFVHIASICAAVL) is an intramembrane region (helical). Residues 247–268 (SKFMSMFCGVYEQPYYYTDMLT) lie on the Cytoplasmic side of the membrane. 2 intramembrane regions (helical) span residues 269–280 (VGCAVGVGCCFG) and 281–290 (TPLGGVLFSI). Residues 291–301 (EVTSTYFAVRN) are Cytoplasmic-facing. The helical transmembrane segment at 302-321 (YWRGFFAATFSAFVFRVLAV) threads the bilayer. Residues 322 to 347 (WNKDAVTITALFRTNFRMDFPFDLQE) are Extracellular-facing. Residues 348-376 (LPAFAIIGICCGFLGAVFVYLHRQVMLGV) form a helical membrane-spanning segment. Topologically, residues 377–390 (RKHKALSQFLAKHR) are cytoplasmic. Residues 391 to 408 (LLYPGIVTFIIASFTFPP) form a helical membrane-spanning segment. At 409-414 (GIGQFM) the chain is on the extracellular side. An intramembrane region (note=Loop between two helices) is located at residues 415–418 (AGEL). Positions 419–426 (MPREAIST) form an intramembrane region, helical. The Extracellular segment spans residues 427-457 (LFDNNTWVKHVGDPESLGRSAVWIHPRVNVI). The helical intramembrane region spans 458-475 (IIIFLFFIMKFWMSIVAT). The segment at residues 476 to 482 (TMPIPCG) is an intramembrane region (note=Loop between two helices). A Selectivity filter part_3 motif is present at residues 482-486 (GGFMP). The helical intramembrane region spans 483 to 498 (GFMPVFVLGAAFGRLV). F484 is a binding site for chloride. At 499 to 521 (GEIMAMLFPDGILFDDIIYKILP) the chain is on the extracellular side. The helical intramembrane region spans 522-538 (GGYAVIGAAALTGAVSH). An intramembrane region (note=Loop between two helices) is located at residues 539–540 (TV). Positions 541–554 (STAVICFELTGQIA) form an intramembrane region, helical. Residues 555 to 557 (HIL) lie on the Extracellular side of the membrane. Residues 558 to 571 (PMMVAVILANMVAQ) constitute an intramembrane region (helical). The segment at residues 572–575 (SLQP) is an intramembrane region (note=Loop between two helices). Positions 576-578 (SLY) form an intramembrane region, helical. Chloride is bound at residue Y578. At 579 to 976 (DSIIQVKKLP…DEEDEDELIL (398 aa)) the chain is on the cytoplasmic side. Residues 609–668 (MVRDVKFVSATCTYGELRTLLQTTTVKTLPLVDSKDSMILLGSVERSELQSLLQRHLGPE) enclose the CBS 1 domain. The segment at 707–759 (DEDEDEDLSGKPELPPLPPPHPLPSAPLSSEESNGPLPSHKQQPEAPEPADQR) is disordered. A compositionally biased stretch (pro residues) spans 719–731 (ELPPLPPPHPLPS). The CBS 2 domain maps to 816–871 (IDQSPFQLVEQTSLHKTHTLFSLLGLHLAYVTSMGKLRGVLALEELQKAIEGHTKS). The segment at 872–976 (GVQLRPPLAS…DEEDEDELIL (105 aa)) is disordered. S881 is subject to Phosphoserine. Residues 914-925 (SPEPPAPSPSPA) are compositionally biased toward pro residues. Acidic residues-rich tracts occupy residues 938–955 (ELEE…EELA) and 967–976 (DEEDEDELIL).

The protein belongs to the chloride channel (TC 2.A.49) family. ClC-1/CLCN1 subfamily. As to quaternary structure, homodimer.

Its subcellular location is the cell membrane. It localises to the sarcolemma. It is found in the T-tubule. It carries out the reaction chloride(in) = chloride(out). It catalyses the reaction thiocyanate(in) = thiocyanate(out). The catalysed reaction is bromide(in) = bromide(out). The enzyme catalyses nitrate(in) = nitrate(out). It carries out the reaction iodide(out) = iodide(in). Its activity is regulated as follows. Modulated by membrane voltage with depolarization favouring channel opening and hyperpolarization favouring channel closure. Inhibited by acidic pH and ATP binding due to a shift of voltage dependence of common gating to more positive voltages. Inhibited by 9-anthracene-carboxylic. Voltage-gated chloride channel involved in skeletal muscle excitability. Generates most of the plasma membrane chloride conductance in skeletal muscle fibers, stabilizes the resting membrane potential and contributes to the repolarization phase during action potential firing. Forms a homodimeric channel where each subunit has its own ion conduction pathway. Conducts double-barreled currents controlled by two types of gates, two fast glutamate gates that control each subunit independently and a slow common gate that opens and shuts off both subunits simultaneously. Has a significant open probability at muscle resting potential and is further activated upon membrane depolarization. Permeable to small monovalent anions with ion selectivity for chloride &gt; thiocyanate &gt; bromide &gt; nitrate &gt; iodide. This chain is Chloride channel protein 1 (CLCN1), found in Canis lupus familiaris (Dog).